The following is a 91-amino-acid chain: Small ribosomal subunit protein bS20 (91 aa).

A disordered region spans residues 1–28; the sequence is MANTASAEKRNRQAQKRRARNVQVRTGV.

This sequence belongs to the bacterial ribosomal protein bS20 family.

Its function is as follows. Binds directly to 16S ribosomal RNA. This Anaeromyxobacter dehalogenans (strain 2CP-1 / ATCC BAA-258) protein is Small ribosomal subunit protein bS20.